We begin with the raw amino-acid sequence, 404 residues long: Serine/threonine transporter SstT (404 aa).

The next 8 membrane-spanning stretches (helical) occupy residues 17–37 (IGIGVVIGVMLGILAPDLTGF), 39–59 (ILGKLFVGGLKAIAPLLVFAL), 75–95 (MTLIIVLYLFGTFASALVAVL), 138–158 (ALATANYIGVLSWAIIFGLAL), 179–199 (IVVWIINLAPIGIMSLVFTTI), 212–232 (FLILVLVGTMVFVALVVNPLI), 287–307 (IPLGATINMGGAAITINVLTL), and 313–333 (FGIPIDFLTALLLSVVAAVSA).

Belongs to the dicarboxylate/amino acid:cation symporter (DAACS) (TC 2.A.23) family.

It is found in the cell membrane. It catalyses the reaction L-serine(in) + Na(+)(in) = L-serine(out) + Na(+)(out). It carries out the reaction L-threonine(in) + Na(+)(in) = L-threonine(out) + Na(+)(out). Its function is as follows. Involved in the import of serine and threonine into the cell, with the concomitant import of sodium (symport system). The chain is Serine/threonine transporter SstT from Streptococcus pyogenes serotype M12 (strain MGAS2096).